The sequence spans 146 residues: Snake venom vascular endothelial growth factor toxin (146 aa).

An N-terminal signal peptide occupies residues 1 to 24 (MAAYLLAVAILFCIQGWPLGTVQG). Pyrrolidone carboxylic acid is present on Q25. Intrachain disulfides connect C38–C80, C69–C115, and C73–C117. The disordered stretch occupies residues 119-146 (PRSASGVNSRKHKRNPEEGEPRAKFPFV). Residues 133–146 (NPEEGEPRAKFPFV) are compositionally biased toward basic and acidic residues.

The protein belongs to the PDGF/VEGF growth factor family. Snake venom VEGF subfamily. As to quaternary structure, homodimer; disulfide-linked. Interacts with VEGF receptor-1 (FLT1) with a high affinity, whereas it binds to VEGF receptor-2 (KDR) with a low affinity. Does not bind VEGF receptor-3 (FLT4). Expressed by the venom gland.

Its subcellular location is the secreted. In terms of biological role, snake venom VEGFs may contribute to venom dispersion and prey subjugation by inducing vascular permeability and hypotension. This protein induces vascular permeability probably through VEGF (VEGFR) signaling. This protein also induces a drastic hypotensive effect after intravenous injection. The hypotension is mediated by nitric oxide (NO), which is produced by VEGF-activated endothelium NO synthase. Also induces angiogenesis in vitro. Like other crotalid VEGFs, this protein interacts with VEGF receptor-1 (FLT1) with a high affinity, whereas it binds to VEGF receptor-2 (KDR) with a low affinity. This Bothrops insularis (Golden lancehead) protein is Snake venom vascular endothelial growth factor toxin.